Consider the following 270-residue polypeptide: SURF1-like protein (270 aa).

2 helical membrane passes run 7 to 29 (GFKL…VYRY) and 246 to 265 (YIGT…FRYM).

It belongs to the SURF1 family.

The protein localises to the mitochondrion inner membrane. Its function is as follows. Probably involved in the biogenesis of the COX complex. The sequence is that of SURF1-like protein (surf1-1) from Dictyostelium discoideum (Social amoeba).